A 370-amino-acid chain; its full sequence is Trans-enoyl reductase xenG (370 aa).

Residues 1-32 (MASTGLPQLPPSQKAVIQSEKTPGAFEVSENR) form a disordered region. Residues 54–57 (CDWK), 177–180 (STAS), 200–203 (SPKN), Tyr-218, 265–266 (FE), and 356–357 (VS) contribute to the NADP(+) site.

The protein belongs to the zinc-containing alcohol dehydrogenase family. Monomer.

The protein operates within mycotoxin biosynthesis. Trans-enoyl reductase; part of the gene cluster that mediates the biosynthesis of xenoacremones such as xenoacremone A, a compound that shows inhibitory activity toward the PI3K/AKT signaling pathway and which has the ability to induce apoptosis of A549 lung cancer cells. Within the pathway, cooperation of the hybrid PKS-NRPS xenE and the trans-acting enoyl reductase xenG is responsible for the formation of the reduced tyrosine-nonaketide derivative. The alpha/beta hydrolase xenA then accelerates intramolecular nucleophilic attack to give a pyrrolidone derivative. Subsequently, three enzymes, xenF, xenD, and xenC, coordinately participate in the conversion to xenoacremone B. XenF catalyzes sigmatropic rearrangement to form an A-ring, which leads to an unusual intermediate with a hexane ring, which is required for the formation of the tricarbocyclic product. Epoxidation catalyzed by xenD and the formation of the paracyclophane ether catalyzed by xenC initiate a spontaneous intramolecular Diels-Alder (IMDA) reaction to yield xenoacremone B. Spontaneous hydration of xenoacremone B leads to the formation of xenoacremone A, which undergoes subsequent methylation to afford xenoacremone C. The protein is Trans-enoyl reductase xenG of Xenoacremonium sinensis (Endophyte fungus).